Here is a 639-residue protein sequence, read N- to C-terminus: UvrABC system protein C (639 aa).

The GIY-YIG domain occupies 20-97; the sequence is ERSGVYRMFD…IKKFQPKFNI (78 aa). The 36-residue stretch at 207-242 folds into the UVR domain; that stretch reads KELQENLSRKMEELSSQMRFEEAAEIRDRIKALSYV.

It belongs to the UvrC family. In terms of assembly, interacts with UvrB in an incision complex.

It is found in the cytoplasm. Its function is as follows. The UvrABC repair system catalyzes the recognition and processing of DNA lesions. UvrC both incises the 5' and 3' sides of the lesion. The N-terminal half is responsible for the 3' incision and the C-terminal half is responsible for the 5' incision. The sequence is that of UvrABC system protein C from Rickettsia conorii (strain ATCC VR-613 / Malish 7).